Here is a 216-residue protein sequence, read N- to C-terminus: Large ribosomal subunit protein uL24m (216 aa).

Residues M1–M9 constitute a mitochondrion transit peptide. Positions V56 to E89 constitute a KOW domain. Positions P167–T186 are disordered.

Belongs to the universal ribosomal protein uL24 family. Component of the mitochondrial ribosome large subunit (39S) which comprises a 16S rRNA and about 50 distinct proteins.

The protein resides in the mitochondrion. This chain is Large ribosomal subunit protein uL24m (mrpl24), found in Danio rerio (Zebrafish).